We begin with the raw amino-acid sequence, 876 residues long: DNA mismatch repair protein MutS (876 aa).

628 to 635 (GPNMAGKS) is an ATP binding site.

This sequence belongs to the DNA mismatch repair MutS family.

This protein is involved in the repair of mismatches in DNA. It is possible that it carries out the mismatch recognition step. This protein has a weak ATPase activity. The sequence is that of DNA mismatch repair protein MutS from Chlorobaculum parvum (strain DSM 263 / NCIMB 8327) (Chlorobium vibrioforme subsp. thiosulfatophilum).